A 93-amino-acid polypeptide reads, in one-letter code: MSRSVKKGPYVDPKLLKKIVEMNKKNEKKVIKTWSRSSTIVPEMVGHTIAVHDGRKHVPVYITEAMVGHKLGEFAPTRTFHGHADTEKTSKVK.

It belongs to the universal ribosomal protein uS19 family.

Its function is as follows. Protein S19 forms a complex with S13 that binds strongly to the 16S ribosomal RNA. The sequence is that of Small ribosomal subunit protein uS19 from Thermoanaerobacter pseudethanolicus (strain ATCC 33223 / 39E) (Clostridium thermohydrosulfuricum).